A 335-amino-acid chain; its full sequence is Serine/threonine-protein kinase crk1 (335 aa).

Positions 11–292 (YVKERKVGEG…AQQALEHHYF (282 aa)) constitute a Protein kinase domain. ATP is bound by residues 17-25 (VGEGTYAVV) and lysine 40. Residue aspartate 133 is the Proton acceptor of the active site. Residue serine 162 is modified to Phosphoserine. Serine 165 is subject to Phosphoserine; by CAK. Residue serine 318 is modified to Phosphoserine.

This sequence belongs to the protein kinase superfamily. CMGC Ser/Thr protein kinase family. CDC2/CDKX subfamily. As to quaternary structure, one of the nine subunits forming the core-TFIIH basal transcription factor. Interacts with mcs2 and tfb3.

It is found in the cytoplasm. The protein localises to the nucleus. It catalyses the reaction [DNA-directed RNA polymerase] + ATP = phospho-[DNA-directed RNA polymerase] + ADP + H(+). Its function is as follows. Protein kinase essential for cell proliferation, where it is required for completion of cytokinesis. Phosphorylates the C-terminal repeat domain (CTD) of RNA polymerase II. The chain is Serine/threonine-protein kinase crk1 (crk1) from Schizosaccharomyces pombe (strain 972 / ATCC 24843) (Fission yeast).